Consider the following 751-residue polypeptide: Zinc finger protein 184 (751 aa).

Residues Val28–Ala99 form the KRAB domain. Phosphoserine is present on residues Ser117, Ser122, and Ser199. Positions Ser191 to Glu202 are enriched in polar residues. The tract at residues Ser191–Asn212 is disordered. A Glycyl lysine isopeptide (Lys-Gly) (interchain with G-Cter in SUMO2) cross-link involves residue Lys206. C2H2-type zinc fingers lie at residues Cys222–His244, Tyr250–His272, Tyr278–His300, Tyr306–His328, Tyr334–His356, Phe362–His384, Tyr390–His412, Tyr418–His440, Tyr446–His468, Tyr474–His496, Phe502–His524, Tyr530–His552, Tyr558–His580, Tyr586–His608, Tyr614–His636, Tyr642–His664, Tyr670–His692, Tyr698–His720, and Phe726–His748.

The protein belongs to the krueppel C2H2-type zinc-finger protein family. In terms of tissue distribution, predominant expression in testis.

The protein localises to the nucleus. In terms of biological role, may be involved in transcriptional regulation. The protein is Zinc finger protein 184 (ZNF184) of Homo sapiens (Human).